The chain runs to 1058 residues: Leucine--tRNA ligase, cytoplasmic (1058 aa).

Residues 48–58 carry the 'HIGH' region motif; the sequence is PYMNGRLHVGH. The 'KMSKS' region motif lies at 711–715; sequence KMSKS. An ATP-binding site is contributed by K714.

It belongs to the class-I aminoacyl-tRNA synthetase family.

The protein localises to the cytoplasm. The enzyme catalyses tRNA(Leu) + L-leucine + ATP = L-leucyl-tRNA(Leu) + AMP + diphosphate. In Dictyostelium discoideum (Social amoeba), this protein is Leucine--tRNA ligase, cytoplasmic (leuS).